The sequence spans 543 residues: Glutamyl-tRNA(Gln) amidotransferase subunit A, chloroplastic/mitochondrial (543 aa).

Catalysis depends on charge relay system residues lysine 123 and serine 198. Catalysis depends on serine 222, which acts as the Acyl-ester intermediate.

It belongs to the amidase family. GatA subfamily. Subunit of the heterotrimeric GatCAB amidotransferase (AdT) complex, composed of A, B and C subunits.

Its subcellular location is the mitochondrion. The protein resides in the plastid. It is found in the chloroplast stroma. It catalyses the reaction L-glutamyl-tRNA(Gln) + L-glutamine + ATP + H2O = L-glutaminyl-tRNA(Gln) + L-glutamate + ADP + phosphate + H(+). Its function is as follows. Allows the formation of correctly charged Gln-tRNA(Gln) through the transamidation of misacylated Glu-tRNA(Gln) in chloroplasts and mitochondria. The reaction takes place in the presence of glutamine and ATP through an activated gamma-phospho-Glu-tRNA(Gln). The protein is Glutamyl-tRNA(Gln) amidotransferase subunit A, chloroplastic/mitochondrial of Oryza sativa subsp. japonica (Rice).